We begin with the raw amino-acid sequence, 3095 residues long: HD protein homolog (3095 aa).

Disordered regions lie at residues 105–197, 536–561, 1312–1371, 1509–1547, and 2005–2037; these read PHQH…NGNA, QQQQ…TMSG, PPQQ…STVI, KSTS…TTPS, and KELT…KEEE. A compositionally biased stretch (polar residues) spans 115–139; it reads STNLTDHLSQNSVTPSVPTTPNYQQ. 2 stretches are compositionally biased toward low complexity: residues 140–197 and 536–551; these read SPST…NGNA and QQQQ…QQQQ. Residues 552–561 show a composition bias toward polar residues; that stretch reads HNLTSSTMSG. Composition is skewed to low complexity over residues 1315 to 1368, 1510 to 1547, and 2008 to 2018; these read QQQQ…LNNS, STSS…TTPS, and TNNNNNNNNNI.

It belongs to the huntingtin family.

It is found in the cytoplasm. Its subcellular location is the nucleus. Its function is as follows. May play a role in microtubule-mediated transport or vesicle function. The sequence is that of HD protein homolog (htt) from Dictyostelium discoideum (Social amoeba).